The chain runs to 313 residues: MAHCLHPEKFFPVVKSVALPPGSLNGKVALVTGGGTGLGKAIATTFAHLGASVAIAARRLDVLEKTADEIRSSTGGVCEPFQMDVKDPAKVAKAFDAVEKKLGHTPDILINNAAGNFIMATERLSPNAYGTIIDIVLKGTLHVTTELGRRCIQQKRGASVLSITTLYAQSGAPFVVPSAVSKAGVENMTKSLASEWAKHGLRFNAIAPGPIPTEGAFGRLFAGELKDSGDAMKASVPVGRLGHPEEIANLAAFMSSDFMSWMNGAIIDFDGGQQHIHHGSHMGQFLHEWDNEKWEETENLIRGRTGKEKKSKL.

Residue 29-61 (ALVTGGGTGLGKAIATTFAHLGASVAIAARRLD) participates in NADP(+) binding.

It belongs to the short-chain dehydrogenases/reductases (SDR) family. 2,4-dienoyl-CoA reductase subfamily.

This is an uncharacterized protein from Caenorhabditis elegans.